The primary structure comprises 674 residues: Forkhead box protein P1 (674 aa).

The segment covering 1 to 19 (MMQESGTETKSNGSAIQNG) has biased composition (polar residues). Positions 1 to 44 (MMQESGTETKSNGSAIQNGSSGGNHLLECGSLREGRSNGETPAV) are disordered. The residue at position 82 (S82) is a Phosphoserine. The segment covering 269–281 (MNPHASTNGQLSV) has biased composition (polar residues). A disordered region spans residues 269 to 296 (MNPHASTNGQLSVHTPKRESLSHEEHPH). Basic and acidic residues predominate over residues 284–296 (PKRESLSHEEHPH). Residue K285 forms a Glycyl lysine isopeptide (Lys-Gly) (interchain with G-Cter in SUMO2) linkage. A C2H2-type zinc finger spans residues 304-329 (GVCKWPGCEAVCEDFQSFLKHLNSEH). Positions 346 to 367 (VQQLELQLAKDKERLQAMMTHL) are leucine-zipper. Residues K370 and K375 each participate in a glycyl lysine isopeptide (Lys-Gly) (interchain with G-Cter in SUMO2) cross-link. A CTBP1-binding region spans residues 380–384 (PLNLV). Residues 388-401 (TLSKSASEASPQSL) are compositionally biased toward polar residues. Positions 388–427 (TLSKSASEASPQSLPHTPTTPTAPITPATQGPSVITTTSM) are disordered. Low complexity predominate over residues 402-419 (PHTPTTPTAPITPATQGP). K440 participates in a covalent cross-link: Glycyl lysine isopeptide (Lys-Gly) (interchain with G-Cter in SUMO2). A DNA-binding region (fork-head) is located at residues 462–552 (RPPFTYASLI…PQKISGNPSL (91 aa)). Positions 608–674 (EHTNSNESDS…EDEPVNEDME (67 aa)) are disordered. Residues 609-620 (HTNSNESDSSPG) are compositionally biased toward polar residues. A Phosphothreonine modification is found at T650. S655 carries the phosphoserine modification. The span at 664-674 (YEDEPVNEDME) shows a compositional bias: acidic residues.

Forms homodimers and heterodimers with FOXP2 and FOXP4. Dimerization is required for DNA-binding. Self-associates. Interacts with CTBP1. Interacts with NCOR2 and AR. Interacts with FOXP2. Interacts with TBR1. Interacts with AURKA; this interaction facilitates the phosphorylation of FOXP1, which suppresses the expression of FBXL7. Interacts with ZMYM2.

The protein resides in the nucleus. Transcriptional repressor. Can act with CTBP1 to synergistically repress transcription but CTPBP1 is not essential. Plays an important role in the specification and differentiation of lung epithelium. Acts cooperatively with FOXP4 to regulate lung secretory epithelial cell fate and regeneration by restricting the goblet cell lineage program; the function may involve regulation of AGR2. Essential transcriptional regulator of B-cell development. Involved in regulation of cardiac muscle cell proliferation. Involved in the columnar organization of spinal motor neurons. Promotes the formation of the lateral motor neuron column (LMC) and the preganglionic motor column (PGC) and is required for respective appropriate motor axon projections. The segment-appropriate generation of spinal cord motor columns requires cooperation with other Hox proteins. Can regulate PITX3 promoter activity; may promote midbrain identity in embryonic stem cell-derived dopamine neurons by regulating PITX3. Negatively regulates the differentiation of T follicular helper cells T(FH)s. Involved in maintenance of hair follicle stem cell quiescence; the function probably involves regulation of FGF18. Represses transcription of various pro-apoptotic genes and cooperates with NF-kappa B-signaling in promoting B-cell expansion by inhibition of caspase-dependent apoptosis. Binds to CSF1R promoter elements and is involved in regulation of monocyte differentiation and macrophage functions; repression of CSF1R in monocytes seems to involve NCOR2 as corepressor. Involved in endothelial cell proliferation, tube formation and migration indicative for a role in angiogenesis; the role in neovascularization seems to implicate suppression of SEMA5B. Can negatively regulate androgen receptor signaling. Acts as a transcriptional activator of the FBXL7 promoter; this activity is regulated by AURKA. This Bos taurus (Bovine) protein is Forkhead box protein P1 (FOXP1).